The sequence spans 260 residues: Collagenase (260 aa).

Residues 1 to 16 form the signal peptide; the sequence is MKFLLVFALALATTSA. Residues 17-30 constitute a propeptide that is removed on maturation; the sequence is FQHPASIFELREGR. The region spanning 31–257 is the Peptidase S1 domain; the sequence is IINGYEAYTG…YMDWIQQNTG (227 aa). Residues cysteine 60 and cysteine 76 are joined by a disulfide bond. Active-site charge relay system residues include histidine 75 and aspartate 118. Cystine bridges form between cysteine 181–cysteine 196 and cysteine 206–cysteine 234. The active-site Charge relay system is the serine 210.

Belongs to the peptidase S1 family.

The protein localises to the secreted. The enzyme catalyses Hydrolysis of proteins including native collagen at Xaa-|-Ala bond leaving an N-terminal (75%) and a C-terminal (25%) fragment.. Inhibited by diisopropylfluorophosphate. Its function is as follows. This enzyme is a serine protease capable of degrading the native triple helix of collagen. Also cleaves the B chain of insulin at the 15-Leu-|-Try-16 and 22-Arg-|-Gly-23 bonds. Hydrolyzes casein, but not Px-Pro-Leu-Gly-Pro-DArg, BzArgNHPh, AcTyrNHPh, 2-naphthyl phosphate, 2-naphthyl butyrate, 2-naphthyl caprylate, 2-naphthyl myristate, L-leucine 2-2-naphthylamide, L-valine 2-naphthylamide, L-cysteine 2-naphthylamide or L-glutarylphenylalanine 2-naphthylamide. The sequence is that of Collagenase from Hypoderma lineatum (Early cattle grub).